The following is a 208-amino-acid chain: Large ribosomal subunit protein uL4 (208 aa).

The tract at residues 51–79 (AKERAEVSFSTKKLKKQKGTGGARAGSRK) is disordered.

The protein belongs to the universal ribosomal protein uL4 family. In terms of assembly, part of the 50S ribosomal subunit.

In terms of biological role, one of the primary rRNA binding proteins, this protein initially binds near the 5'-end of the 23S rRNA. It is important during the early stages of 50S assembly. It makes multiple contacts with different domains of the 23S rRNA in the assembled 50S subunit and ribosome. Its function is as follows. Forms part of the polypeptide exit tunnel. This is Large ribosomal subunit protein uL4 from Cytophaga hutchinsonii (strain ATCC 33406 / DSM 1761 / CIP 103989 / NBRC 15051 / NCIMB 9469 / D465).